A 306-amino-acid polypeptide reads, in one-letter code: Histone-lysine N-methyltransferase SETMAR (306 aa).

The 64-residue stretch at 60 to 123 (PGCACLKTPC…RCRNRVVQWG (64 aa)) folds into the Pre-SET domain. The Zn(2+) site is built by Cys-62, Cys-64, Cys-69, Cys-74, Cys-76, Cys-105, Cys-109, Cys-111, and Cys-115. Residues 126–250 (FHLQVFKTDH…PEEELSYDYS (125 aa)) form the SET domain. Residues 136–138 (KGW), Tyr-179, Arg-207, and 210–211 (NH) each bind S-adenosyl-L-methionine. Zn(2+)-binding residues include Cys-213, Cys-274, Cys-276, and Cys-281. The Post-SET domain occupies 270-286 (LRKPCYCGARSCAAFLP).

This sequence belongs to the class V-like SAM-binding methyltransferase superfamily.

The protein localises to the nucleus. The protein resides in the chromosome. It carries out the reaction L-lysyl(36)-[histone H3] + 2 S-adenosyl-L-methionine = N(6),N(6)-dimethyl-L-lysyl(36)-[histone H3] + 2 S-adenosyl-L-homocysteine + 2 H(+). Its function is as follows. Histone methyltransferase that methylates 'Lys-4' and 'Lys-36' of histone H3, 2 specific tags for epigenetic transcriptional activation. Specifically mediates dimethylation of H3 'Lys-36'. This chain is Histone-lysine N-methyltransferase SETMAR, found in Bos taurus (Bovine).